A 205-amino-acid polypeptide reads, in one-letter code: Guanylate kinase (205 aa).

The Guanylate kinase-like domain maps to 6–185; the sequence is GLLIVLSGPS…ACERIKAIVV (180 aa). Position 13–20 (13–20) interacts with ATP; it reads GPSGVGKG.

This sequence belongs to the guanylate kinase family.

It localises to the cytoplasm. The catalysed reaction is GMP + ATP = GDP + ADP. Essential for recycling GMP and indirectly, cGMP. The protein is Guanylate kinase of Bacillus anthracis.